Here is a 234-residue protein sequence, read N- to C-terminus: Peptidase E (234 aa).

Catalysis depends on charge relay system residues Ser-123, Asp-138, and His-160.

Belongs to the peptidase S51 family.

The protein resides in the cytoplasm. The enzyme catalyses Dipeptidase E catalyzes the hydrolysis of dipeptides Asp-|-Xaa. It does not act on peptides with N-terminal Glu, Asn or Gln, nor does it cleave isoaspartyl peptides.. Its function is as follows. Hydrolyzes dipeptides containing N-terminal aspartate residues. May play a role in allowing the cell to use peptide aspartate to spare carbon otherwise required for the synthesis of the aspartate family of amino acids. This Actinobacillus pleuropneumoniae serotype 7 (strain AP76) protein is Peptidase E.